We begin with the raw amino-acid sequence, 492 residues long: Katanin p60 ATPase-containing subunit A1 (492 aa).

The segment at 80–186 (STPPKASQQE…ESEPKKFDST (107 aa)) is disordered. Positions 145–171 (PNDKGKAVRGREKKDQQNKGKEEKSKS) are enriched in basic and acidic residues. An ATP-binding site is contributed by 250–257 (GPPGTGKT).

Belongs to the AAA ATPase family. Katanin p60 subunit A1 subfamily. As to quaternary structure, can homooligomerize into hexameric rings, which may be promoted by interaction with microtubules. Interacts with KATNB1, which may serve as a targeting subunit.

It is found in the cytoplasm. It localises to the cytoskeleton. The protein localises to the microtubule organizing center. The protein resides in the centrosome. Its subcellular location is the spindle pole. It is found in the spindle. It carries out the reaction n ATP + n H2O + a microtubule = n ADP + n phosphate + (n+1) alpha/beta tubulin heterodimers.. ATPase activity is stimulated by microtubules, which promote homooligomerization. ATP-dependent microtubule severing is stimulated by interaction with KATNB1. In terms of biological role, catalytic subunit of a complex which severs microtubules in an ATP-dependent manner. Microtubule severing may promote rapid reorganization of cellular microtubule arrays and the release of microtubules from the centrosome following nucleation. The chain is Katanin p60 ATPase-containing subunit A1 from Gallus gallus (Chicken).